We begin with the raw amino-acid sequence, 136 residues long: Basic phospholipase A2 Tgc-K49 (136 aa).

A signal peptide spans 1–15; that stretch reads MRTLWIVAVLLVGEG. 7 cysteine pairs are disulfide-bonded: Cys41-Cys130, Cys43-Cys59, Cys58-Cys110, Cys64-Cys136, Cys65-Cys103, Cys72-Cys96, and Cys90-Cys101. His62 is an active-site residue. Asp104 is an active-site residue.

It belongs to the phospholipase A2 family. Group II subfamily. K49 sub-subfamily. As to expression, expressed by the venom gland.

The protein resides in the secreted. It carries out the reaction a 1,2-diacyl-sn-glycero-3-phosphocholine + H2O = a 1-acyl-sn-glycero-3-phosphocholine + a fatty acid + H(+). Functionally, PLA2 catalyzes the calcium-dependent hydrolysis of the 2-acyl groups in 3-sn-phosphoglycerides. The sequence is that of Basic phospholipase A2 Tgc-K49 from Trimeresurus gracilis (Kikuchi habu).